We begin with the raw amino-acid sequence, 66 residues long: U-scoloptoxin(04)-Ssd2a (66 aa).

A signal peptide spans 1–19; that stretch reads MKAIYILSVLLLMMLPILS.

The protein belongs to the scoloptoxin-04 family. Contains 2 disulfide bonds. In terms of tissue distribution, expressed by the venom gland.

Its subcellular location is the secreted. The chain is U-scoloptoxin(04)-Ssd2a from Scolopendra dehaani (Thai centipede).